A 188-amino-acid chain; its full sequence is Dual specificity protein phosphatase 18 (188 aa).

The region spanning Gly-19–Gly-160 is the Tyrosine-protein phosphatase domain. The interval Met-95–Ile-141 is sufficient for mitochondrial localization. The active-site Phosphocysteine intermediate is Cys-104.

Belongs to the protein-tyrosine phosphatase family. Non-receptor class dual specificity subfamily.

The protein localises to the cytoplasm. Its subcellular location is the nucleus. The protein resides in the mitochondrion inner membrane. It catalyses the reaction O-phospho-L-tyrosyl-[protein] + H2O = L-tyrosyl-[protein] + phosphate. The enzyme catalyses O-phospho-L-seryl-[protein] + H2O = L-seryl-[protein] + phosphate. The catalysed reaction is O-phospho-L-threonyl-[protein] + H2O = L-threonyl-[protein] + phosphate. Its function is as follows. Can dephosphorylate single and diphosphorylated synthetic MAPK peptides, with preference for the phosphotyrosine and diphosphorylated forms over phosphothreonine. In vitro, dephosphorylates p-nitrophenyl phosphate (pNPP). This is Dual specificity protein phosphatase 18 (Dusp18) from Mus musculus (Mouse).